The primary structure comprises 122 residues: Large ribosomal subunit protein uL14 (122 aa).

The protein belongs to the universal ribosomal protein uL14 family. As to quaternary structure, part of the 50S ribosomal subunit. Forms a cluster with proteins L3 and L19. In the 70S ribosome, L14 and L19 interact and together make contacts with the 16S rRNA in bridges B5 and B8.

Functionally, binds to 23S rRNA. Forms part of two intersubunit bridges in the 70S ribosome. The sequence is that of Large ribosomal subunit protein uL14 from Streptomyces avermitilis (strain ATCC 31267 / DSM 46492 / JCM 5070 / NBRC 14893 / NCIMB 12804 / NRRL 8165 / MA-4680).